A 571-amino-acid polypeptide reads, in one-letter code: Putative F-box protein At5g39460 (571 aa).

The F-box domain occupies 9 to 55; that stretch reads ACLLLTLPEDVFAVISRFLSPSDICNLILCGKSLCALVDSEKTWLVQ.

The polypeptide is Putative F-box protein At5g39460 (Arabidopsis thaliana (Mouse-ear cress)).